The primary structure comprises 283 residues: Homeobox protein six1a (283 aa).

Residues 124–183 (GEETSYCFKEKSRSVLREWYTHNPYPSPREKRELAEATGLTTTQVSNWFKNRRQRDRAAE) constitute a DNA-binding region (homeobox). Positions 168 to 264 (VSNWFKNRRQ…PLHGMQGHPH (97 aa)) are disordered. A compositionally biased stretch (basic and acidic residues) spans 179-190 (DRAAEAKERENG). Low complexity predominate over residues 237 to 248 (MNNPAAPAYPMP).

Belongs to the SIX/Sine oculis homeobox family.

The protein localises to the nucleus. It localises to the cytoplasm. Transcription factor that is involved in the regulation of cell proliferation, apoptosis and embryonic development. Depending on context, functions as a transcriptional repressor or activator. Plays an important role in the development of the inner ear, where it promotes hair cell proliferation and inhibits proliferation of neural progenitor cells. Required for normal myogenesis. Plays a role in the development of fast muscle fibers throughout the body, as well as the development of craniofacial muscles. The protein is Homeobox protein six1a (six1a) of Danio rerio (Zebrafish).